Reading from the N-terminus, the 166-residue chain is NAD(P)H-quinone oxidoreductase subunit I, chloroplastic (166 aa).

4Fe-4S ferredoxin-type domains follow at residues 55–84 (GRIHFEFDKCIACEVCVRVCPIDLPVVDWK) and 95–124 (LNYSIDFGICIFCGNCVEYCPTNCLSMTEE). Residues Cys64, Cys67, Cys70, Cys74, Cys104, Cys107, Cys110, and Cys114 each coordinate [4Fe-4S] cluster.

The protein belongs to the complex I 23 kDa subunit family. In terms of assembly, NDH is composed of at least 16 different subunits, 5 of which are encoded in the nucleus. The cofactor is [4Fe-4S] cluster.

The protein resides in the plastid. It is found in the chloroplast thylakoid membrane. It catalyses the reaction a plastoquinone + NADH + (n+1) H(+)(in) = a plastoquinol + NAD(+) + n H(+)(out). The enzyme catalyses a plastoquinone + NADPH + (n+1) H(+)(in) = a plastoquinol + NADP(+) + n H(+)(out). Its function is as follows. NDH shuttles electrons from NAD(P)H:plastoquinone, via FMN and iron-sulfur (Fe-S) centers, to quinones in the photosynthetic chain and possibly in a chloroplast respiratory chain. The immediate electron acceptor for the enzyme in this species is believed to be plastoquinone. Couples the redox reaction to proton translocation, and thus conserves the redox energy in a proton gradient. This Oxypappus scaber protein is NAD(P)H-quinone oxidoreductase subunit I, chloroplastic.